The chain runs to 481 residues: Proline--tRNA ligase (481 aa).

The protein belongs to the class-II aminoacyl-tRNA synthetase family. ProS type 3 subfamily. In terms of assembly, homodimer.

The protein localises to the cytoplasm. The enzyme catalyses tRNA(Pro) + L-proline + ATP = L-prolyl-tRNA(Pro) + AMP + diphosphate. Its function is as follows. Catalyzes the attachment of proline to tRNA(Pro) in a two-step reaction: proline is first activated by ATP to form Pro-AMP and then transferred to the acceptor end of tRNA(Pro). The polypeptide is Proline--tRNA ligase (Chlorobium limicola (strain DSM 245 / NBRC 103803 / 6330)).